The primary structure comprises 350 residues: Protein RecA (350 aa).

Position 80-87 (80-87) interacts with ATP; that stretch reads GPESSGKT.

The protein belongs to the RecA family.

The protein resides in the cytoplasm. Its function is as follows. Can catalyze the hydrolysis of ATP in the presence of single-stranded DNA, the ATP-dependent uptake of single-stranded DNA by duplex DNA, and the ATP-dependent hybridization of homologous single-stranded DNAs. It interacts with LexA causing its activation and leading to its autocatalytic cleavage. In Chlorobium limicola (strain DSM 245 / NBRC 103803 / 6330), this protein is Protein RecA.